A 430-amino-acid chain; its full sequence is FAD-dependent monooxygenase asL4 (430 aa).

Residues 11–14 (GGIA), 33–34 (ER), Arg-108, and Tyr-278 each bind FAD.

It belongs to the aromatic-ring hydroxylase family. It depends on FAD as a cofactor.

It participates in secondary metabolite biosynthesis; terpenoid biosynthesis. In terms of biological role, flavin-dependent monooxygenase; part of the gene cluster that mediates the biosynthesis of xenovulene A, an unusual meroterpenoid that has potent inhibitory effects on the human gamma-aminobutyrate A (GABAA) benzodiazepine receptor. The first step of xenovulene A biosynthesis is the biosynthesis of 3-methylorcinaldehyde performed by the non-reducing polyketide synthase aspks1. The salicylate hydroxylase asL1 then catalyzes the oxidative dearomatization of 3-methylorcinaldehyde to yield a dearomatized hydroxycyclohexadione. The 2-oxoglutarate-dependent dioxygenase asL3 further catalyzes the oxidative ring expansion to provide the first tropolone metabolite. The cytochrome P450 monooxygenase asR2 allows the synthesis of tropolone hemiacetal. In parallel, a previously unrecognised class of terpene cyclase, asR6, produces alpha-humulene from farnesylpyrophosphate (FPP). The putative Diels-Alderase asR5 probably catalyzes the formation of the tropolone-humulene skeleton by linking humulene and the polyketide moiety. Oxidative-ring contractions catalyzed by asL4 and asL6 then processively remove carbon atoms from the polyketide to yield xenovulene A. In Sarocladium schorii (Acremonium strictum (strain IMI 501407)), this protein is FAD-dependent monooxygenase asL4.